Consider the following 574-residue polypeptide: uncharacterized protein (574 aa).

The segment at 297–327 (STASKSKKRRKDEVSGAQRNSSPLPQDAVSS) is disordered. Over residues 313-327 (AQRNSSPLPQDAVSS) the composition is skewed to polar residues.

This is an uncharacterized protein from Macaca fascicularis (Crab-eating macaque).